We begin with the raw amino-acid sequence, 124 residues long: Protein YebF (124 aa).

An N-terminal signal peptide occupies residues methionine 1–alanine 27. The YebF/Cmi domain occupies lysine 36 to leucine 123. Cysteine 40 and cysteine 113 are joined by a disulfide.

The protein belongs to the YebF family.

It is found in the secreted. This Photorhabdus laumondii subsp. laumondii (strain DSM 15139 / CIP 105565 / TT01) (Photorhabdus luminescens subsp. laumondii) protein is Protein YebF.